Reading from the N-terminus, the 1407-residue chain is Probable phosphoribosylformylglycinamidine synthase, chloroplastic/mitochondrial (1407 aa).

The transit peptide at Met-1–Arg-53 directs the protein to the chloroplast and mitochondrion. ATP contacts are provided by residues Gly-407–Asp-418, Gln-487–Tyr-489, and Ala-786. 4 residues coordinate Mg(2+): Asp-787, Glu-826, Asn-830, and Asp-989. An ATP-binding site is contributed by Ser-991. Positions Lys-1141–Thr-1381 constitute a Glutamine amidotransferase type-1 domain. Cys-1235 (nucleophile) is an active-site residue. Active-site residues include His-1366 and Glu-1368.

In the N-terminal section; belongs to the FGAMS family.

It is found in the plastid. The protein resides in the chloroplast. The protein localises to the mitochondrion. It catalyses the reaction N(2)-formyl-N(1)-(5-phospho-beta-D-ribosyl)glycinamide + L-glutamine + ATP + H2O = 2-formamido-N(1)-(5-O-phospho-beta-D-ribosyl)acetamidine + L-glutamate + ADP + phosphate + H(+). It functions in the pathway purine metabolism; IMP biosynthesis via de novo pathway; 5-amino-1-(5-phospho-D-ribosyl)imidazole from N(2)-formyl-N(1)-(5-phospho-D-ribosyl)glycinamide: step 1/2. Functionally, essential to the male gametophyte development. Phosphoribosylformylglycinamidine synthase involved in the purines biosynthetic pathway. Catalyzes the ATP-dependent conversion of formylglycinamide ribonucleotide (FGAR) and glutamine to yield formylglycinamidine ribonucleotide (FGAM) and glutamate. In Arabidopsis thaliana (Mouse-ear cress), this protein is Probable phosphoribosylformylglycinamidine synthase, chloroplastic/mitochondrial.